A 412-amino-acid polypeptide reads, in one-letter code: CCA-adding enzyme (412 aa).

Residues glycine 8 and arginine 11 each coordinate ATP. Residues glycine 8 and arginine 11 each coordinate CTP. Positions 21 and 23 each coordinate Mg(2+). 3 residues coordinate ATP: arginine 91, arginine 137, and arginine 140. Residues arginine 91, arginine 137, and arginine 140 each contribute to the CTP site.

It belongs to the tRNA nucleotidyltransferase/poly(A) polymerase family. Bacterial CCA-adding enzyme type 2 subfamily. The cofactor is Mg(2+).

The catalysed reaction is a tRNA precursor + 2 CTP + ATP = a tRNA with a 3' CCA end + 3 diphosphate. It carries out the reaction a tRNA with a 3' CCA end + 2 CTP + ATP = a tRNA with a 3' CCACCA end + 3 diphosphate. Catalyzes the addition and repair of the essential 3'-terminal CCA sequence in tRNAs without using a nucleic acid template. Adds these three nucleotides in the order of C, C, and A to the tRNA nucleotide-73, using CTP and ATP as substrates and producing inorganic pyrophosphate. tRNA 3'-terminal CCA addition is required both for tRNA processing and repair. Also involved in tRNA surveillance by mediating tandem CCA addition to generate a CCACCA at the 3' terminus of unstable tRNAs. While stable tRNAs receive only 3'-terminal CCA, unstable tRNAs are marked with CCACCA and rapidly degraded. This chain is CCA-adding enzyme, found in Buchnera aphidicola subsp. Schizaphis graminum (strain Sg).